The sequence spans 265 residues: MKNIHKIFSPEKKGKEKISVVTCYDFSFARILNETEIDSILVGDSLGMVFQGNTSTLPVTLEEMIYHTKAVRRGAPDKFLIADLPFLSYQTSIEEGIRSAGKIMKESDCDAVKIEGGSEFICELVSILKQIGVPVMGHLGLTPQSVHVFGGHRVQGKGEESSSKLLKESISLFESGVFSMVLEMIPAELGKKVSQEVGVPTIGIGAGSDCDGQVLVLNDLLGLDINFQPKFLKKFSNLHSIVKEAIADYDKEVKSGEFPGKDHSF.

D44 and D83 together coordinate Mg(2+). Residues 44-45, D83, and K113 contribute to the 3-methyl-2-oxobutanoate site; that span reads DS. E115 provides a ligand contact to Mg(2+). E183 serves as the catalytic Proton acceptor.

This sequence belongs to the PanB family. In terms of assembly, homodecamer; pentamer of dimers. Requires Mg(2+) as cofactor.

It is found in the cytoplasm. It catalyses the reaction 3-methyl-2-oxobutanoate + (6R)-5,10-methylene-5,6,7,8-tetrahydrofolate + H2O = 2-dehydropantoate + (6S)-5,6,7,8-tetrahydrofolate. The protein operates within cofactor biosynthesis; (R)-pantothenate biosynthesis; (R)-pantoate from 3-methyl-2-oxobutanoate: step 1/2. Catalyzes the reversible reaction in which hydroxymethyl group from 5,10-methylenetetrahydrofolate is transferred onto alpha-ketoisovalerate to form ketopantoate. This is 3-methyl-2-oxobutanoate hydroxymethyltransferase from Leptospira interrogans serogroup Icterohaemorrhagiae serovar copenhageni (strain Fiocruz L1-130).